Reading from the N-terminus, the 361-residue chain is Outer mitochondrial transmembrane helix translocase (361 aa).

Residues 1–15 (MVHAETFSRPLSRNE) are Mitochondrial intermembrane-facing. The chain crosses the membrane as a helical span at residues 16 to 32 (VVGLIFRLTIFGAVTYF). At 33–361 (TIKWMVDAID…QNVLTHVCLD (329 aa)) the chain is on the cytoplasmic side. Residue 133 to 140 (GPPGCGKT) coordinates ATP. At Ser322 the chain carries Phosphoserine.

Belongs to the AAA ATPase family. MSP1 subfamily. As to quaternary structure, interacts with GRIA2 and GRIP1 in an ATP-dependent manner. ATAD1-catalyzed ATP hydrolysis disrupts not only its binding to GRIA2 and GRIP1, but also interaction between GRIP1 and GRIA2, leading to AMPAR complex disassembly.

The protein resides in the mitochondrion outer membrane. The protein localises to the peroxisome membrane. It is found in the postsynaptic cell membrane. It carries out the reaction [protein]-with a C-terminal TM segment(out) + ATP + H2O = [protein]-with a C-terminal TM segment(in) + ADP + phosphate + H(+). Functionally, outer mitochondrial translocase required to remove mislocalized tail-anchored transmembrane proteins on mitochondria. Specifically recognizes and binds tail-anchored transmembrane proteins: acts as a dislocase that mediates the ATP-dependent extraction of mistargeted tail-anchored transmembrane proteins from the mitochondrion outer membrane. Also plays a critical role in regulating the surface expression of AMPA receptors (AMPAR), thereby regulating synaptic plasticity and learning and memory. Required for NMDA-stimulated AMPAR internalization and inhibition of GRIA1 and GRIA2 recycling back to the plasma membrane; these activities are ATPase-dependent. The protein is Outer mitochondrial transmembrane helix translocase of Bos taurus (Bovine).